A 61-amino-acid polypeptide reads, in one-letter code: Statherin (61 aa).

An N-terminal signal peptide occupies residues 1–19 (MXFLXFXLXLLXMXXMXXX). A hydroxyapatite-binding; inhibits crystal growth region spans residues 20 to 25 (DSSEEK). S21 and S22 each carry phosphoserine. A disordered region spans residues 37-61 (RYGPYQPFAPQPLYPQPYQPYQPQY). A hydrophobic; inhibits precipitation of calcium phosphate salts region spans residues 37-61 (RYGPYQPFAPQPLYPQPYQPYQPQY). Over residues 43–61 (PFAPQPLYPQPYQPYQPQY) the composition is skewed to pro residues.

This sequence belongs to the histatin/statherin family. Secreted by parotid and submandibular glands.

Its subcellular location is the secreted. Functionally, salivary protein that stabilizes saliva supersaturated with calcium salts by inhibiting the precipitation of calcium phosphate salts. It also modulates hydroxyapatite crystal formation on the tooth surface. This Macaca fascicularis (Crab-eating macaque) protein is Statherin (STATH).